We begin with the raw amino-acid sequence, 514 residues long: MWDVIDLSRWQFALTALYHFLFVPLTLGLIFLLAIMETIYVVTGKTIYRDMTRFWGKLFGINFALGVATGLTMEFQFGTNWSFYSNYVGDIFGAPLAMEALMAFFLESTFVGLFFFGWQRLNKYQHLLVTWLVAFGSNLSALWILNANGWMQYPTGAHFDIDTLRMEMTSFSELVFNPVSQVKFVHTVMAGYVTGAMFIMAISAWYLLRGRERNVALRSFAIGSVFGTLAIIGTLQLGDSSAYEVAQVQPVKLAAMEGEWQTEPAPAPFHVVAWPEQDQERNAFALKIPALLGILATHSLDKPVPGLKNLMAETYPRLQRGRMAWLLMQEISQGNREPHVLQAFRGLEGDLGYGMLLSRYAPDMNHVTAAQYQAAMRGAIPQVAPVFWSFRIMVGCGSLLLLVMLIALVQTLRGKIDQHRWVLKMALWSLPLPWIAIEAGWFMTEFGRQPWAIQDILPTYSAHSALTTGQLAFSLIMIVGLYTLFLIAEVYLMQKYARLGPSAMQSEQPTQQQG.

The Cytoplasmic portion of the chain corresponds to 1–22 (MWDVIDLSRWQFALTALYHFLF). H19 is a heme binding site. The chain crosses the membrane as a helical span at residues 23–42 (VPLTLGLIFLLAIMETIYVV). Over 43-94 (TGKTIYRDMTRFWGKLFGINFALGVATGLTMEFQFGTNWSFYSNYVGDIFGA) the chain is Periplasmic. The helical transmembrane segment at 95 to 114 (PLAMEALMAFFLESTFVGLF) threads the bilayer. Residues 115–129 (FFGWQRLNKYQHLLV) are Cytoplasmic-facing. The chain crosses the membrane as a helical span at residues 130–149 (TWLVAFGSNLSALWILNANG). The Periplasmic segment spans residues 150–187 (WMQYPTGAHFDIDTLRMEMTSFSELVFNPVSQVKFVHT). H186 contributes to the heme binding site. Residues 188 to 207 (VMAGYVTGAMFIMAISAWYL) form a helical membrane-spanning segment. The Cytoplasmic segment spans residues 208–219 (LRGRERNVALRS). A helical membrane pass occupies residues 220 to 239 (FAIGSVFGTLAIIGTLQLGD). The Periplasmic portion of the chain corresponds to 240-392 (SSAYEVAQVQ…VAPVFWSFRI (153 aa)). M393 is a heme binding site. The helical transmembrane segment at 393–412 (MVGCGSLLLLVMLIALVQTL) threads the bilayer. Over 413-470 (RGKIDQHRWVLKMALWSLPLPWIAIEAGWFMTEFGRQPWAIQDILPTYSAHSALTTGQ) the chain is Cytoplasmic. A helical transmembrane segment spans residues 471–490 (LAFSLIMIVGLYTLFLIAEV). At 491–514 (YLMQKYARLGPSAMQSEQPTQQQG) the chain is on the periplasmic side.

Belongs to the cytochrome ubiquinol oxidase subunit 1 family. As to quaternary structure, heterodimer of subunits I and II. Heme is required as a cofactor. The N-terminus is blocked.

Its subcellular location is the cell inner membrane. The enzyme catalyses 2 a ubiquinol + O2 + n H(+)(in) = 2 a ubiquinone + 2 H2O + n H(+)(out). The protein operates within energy metabolism; oxidative phosphorylation. Its activity is regulated as follows. Inhibited by cyanide; is more sensitive to cyanide than cytochrome bd-I oxidase. A terminal oxidase that catalyzes quinol-dependent, Na(+)-independent oxygen uptake. Prefers menadiol over other quinols although ubiquinol was not tested. Generates a proton motive force using protons and electrons from opposite sides of the membrane to generate H(2)O, transferring 1 proton/electron. The sequence is that of Cytochrome bd-II ubiquinol oxidase subunit 1 (appC) from Escherichia coli (strain K12).